Consider the following 309-residue polypeptide: Elongation factor Ts (309 aa).

An involved in Mg(2+) ion dislocation from EF-Tu region spans residues 82–85; that stretch reads TDFV.

It belongs to the EF-Ts family.

Its subcellular location is the cytoplasm. Its function is as follows. Associates with the EF-Tu.GDP complex and induces the exchange of GDP to GTP. It remains bound to the aminoacyl-tRNA.EF-Tu.GTP complex up to the GTP hydrolysis stage on the ribosome. This Rickettsia rickettsii (strain Iowa) protein is Elongation factor Ts.